Here is a 202-residue protein sequence, read N- to C-terminus: Inner membrane-spanning protein YciB (202 aa).

Helical transmembrane passes span 3-23 (ILFD…AGGN), 46-66 (ILLA…WVWM), 73-93 (TMLW…LFFH), 100-120 (WKPT…AVIF), 145-165 (LAWA…AYNF), and 173-193 (FKLF…GFYL).

The protein belongs to the YciB family.

The protein localises to the cell inner membrane. Its function is as follows. Plays a role in cell envelope biogenesis, maintenance of cell envelope integrity and membrane homeostasis. The polypeptide is Inner membrane-spanning protein YciB (Aromatoleum aromaticum (strain DSM 19018 / LMG 30748 / EbN1) (Azoarcus sp. (strain EbN1))).